Consider the following 459-residue polypeptide: ATP-dependent protease ATPase subunit HslU (459 aa).

Residues Val18, 60 to 65, Asp269, Glu337, and Arg409 each bind ATP; that span reads GVGKTE.

This sequence belongs to the ClpX chaperone family. HslU subfamily. As to quaternary structure, a double ring-shaped homohexamer of HslV is capped on each side by a ring-shaped HslU homohexamer. The assembly of the HslU/HslV complex is dependent on binding of ATP.

The protein resides in the cytoplasm. In terms of biological role, ATPase subunit of a proteasome-like degradation complex; this subunit has chaperone activity. The binding of ATP and its subsequent hydrolysis by HslU are essential for unfolding of protein substrates subsequently hydrolyzed by HslV. HslU recognizes the N-terminal part of its protein substrates and unfolds these before they are guided to HslV for hydrolysis. This is ATP-dependent protease ATPase subunit HslU from Myxococcus xanthus (strain DK1622).